The primary structure comprises 120 residues: Ribosomal protein eL22-like 1 (120 aa).

It belongs to the eukaryotic ribosomal protein eL22 family.

The sequence is that of Ribosomal protein eL22-like 1 (rpl22l1) from Xenopus tropicalis (Western clawed frog).